The chain runs to 280 residues: MQPALAPHPSAQDHADQVLHDQLLAAQHQHLTHPQQARPQPPAPQPPHMQPNTPARDQNNIDPAISGATMLTGPPQTPTQPDVTGQETPKTYGKRPLSTSKRAAQNRAAQRAFRQRKEAHIRELEGKVKAYESMGEAIKALQAENYQLREYIINLQSRLLDSQGEVPELPGNIDLSQPRSEIPVPPIPNSGTATTTAPPPTAPQQPQPSHAQAPTSNDDMNSLNRIAVAGLGMRKPPTEEANYLGNNFQAQARRVRPDEGQPEASELPKQEQTHGLPLIS.

The interval 1–102 (MQPALAPHPS…GKRPLSTSKR (102 aa)) is disordered. Positions 39–49 (PQPPAPQPPHM) are enriched in pro residues. Residues 79–89 (TQPDVTGQETP) show a composition bias toward polar residues. The 64-residue stretch at 96–159 (PLSTSKRAAQ…EYIINLQSRL (64 aa)) folds into the bZIP domain. Residues 97–120 (LSTSKRAAQNRAAQRAFRQRKEAH) are basic motif. The segment at 124–155 (LEGKVKAYESMGEAIKALQAENYQLREYIINL) is leucine-zipper. The disordered stretch occupies residues 169–280 (LPGNIDLSQP…EQTHGLPLIS (112 aa)). The segment covering 197-206 (APPPTAPQQP) has biased composition (pro residues).

The protein belongs to the bZIP family.

Its subcellular location is the nucleus. Its function is as follows. Putative transcription factor. In Aspergillus fumigatus (strain ATCC MYA-4609 / CBS 101355 / FGSC A1100 / Af293) (Neosartorya fumigata), this protein is Putative transcription factor kapC (kapC).